Reading from the N-terminus, the 642-residue chain is MPVITLPDGSQRHYDHPVSPMDVALDIGPGLAKATIAGRVNGELVDACDLIENDATLAIITAKDEEGLEIIRHSCAHLLGHAIKQLWPHTKMAIGPVVDNGFYYDVDLDRTLTQEDVEALEKRMHELAEKNYDVIKKKVSWHDARETFVKRGETYKVAILDENIAHDDKPGLYHHEEYVDMCRGPHVPNMRFCHHFKLMKTAGAYWRGDSNNKMLQRIYGTAWADKKALNAYLQRLEEAAKRDHRKIGKQLDLYHMQEEAPGMVFWHNDGWTIFRELEVFVRSKLKEYQYQEVKGPFMMDRVLWEKTGHWDNYKDAMFTTSSENREYCIKPMNCPGHVQIFNQGLKSYRDLPLRMAEFGSCHRNEPSGALHGLMRVRGFTQDDAHIFCTEEQIRDEVNACIRMVYDMYSTFGFEKIVVKLSTRPDKRIGSDEMWDRAEADLAVALEENNIPFEYQLGEGAFYGPKIEFTLYDCLDRAWQCGTVQLDFSLPSRLSASYVGEDNERKVPVMIHRAILGSMERFIGILTEEFAGFFPTWLAPVQVVVMNITDSQSEYVNELTQKLQNAGIRVKADLRNEKIGFKIREHTLRRVPYMLVCGDKEVEAGKVAVRTRRGKDLGSLDVNDVIEKLQQEIRSRSLQQLEE.

The 61-residue stretch at 1–61 folds into the TGS domain; it reads MPVITLPDGS…ENDATLAIIT (61 aa). A catalytic region spans residues 243–534; it reads DHRKIGKQLD…LTEEFAGFFP (292 aa). Positions 334, 385, and 511 each coordinate Zn(2+).

Belongs to the class-II aminoacyl-tRNA synthetase family. In terms of assembly, homodimer. Zn(2+) serves as cofactor.

It localises to the cytoplasm. It carries out the reaction tRNA(Thr) + L-threonine + ATP = L-threonyl-tRNA(Thr) + AMP + diphosphate + H(+). Catalyzes the attachment of threonine to tRNA(Thr) in a two-step reaction: L-threonine is first activated by ATP to form Thr-AMP and then transferred to the acceptor end of tRNA(Thr). Also edits incorrectly charged L-seryl-tRNA(Thr). This chain is Threonine--tRNA ligase, found in Salmonella choleraesuis (strain SC-B67).